We begin with the raw amino-acid sequence, 499 residues long: Serine/threonine-protein phosphatase 5 (499 aa).

The tract at residues 1 to 24 (MAMAEGERTECAETPRDEPPADGT) is disordered. Ala-2 bears the N-acetylalanine mark. TPR repeat units lie at residues 28-61 (AEELKTQANDYFKAKDYENAIKFYSQAIELNPGN), 62-95 (AIYYGNRSLAYLRTECYGYALGDATRAIELDKKY), and 96-129 (IKGYYRRAASNMALGKFRAALRDYETVVKVKPND). The catalytic stretch occupies residues 184–499 (GKVTITFMKD…ANTLLQLGMM (316 aa)). Residues Asp-242, His-244, and Asp-271 each coordinate Mn(2+). His-244 provides a ligand contact to substrate. Substrate-binding positions include Arg-275 and 303–304 (NH). Asn-303 is a binding site for Mn(2+). His-304 functions as the Proton donor/acceptor in the catalytic mechanism. His-352 is a binding site for Mn(2+). Positions 400 and 427 each coordinate substrate. Mn(2+) is bound at residue His-427. The required for autoinhibition stretch occupies residues 495-499 (QLGMM).

It belongs to the PPP phosphatase family. PP-5 (PP-T) subfamily. In terms of assembly, probably forms a complex composed of chaperones HSP90 and HSP70, co-chaperones STIP1/HOP, CDC37, PPP5C, PTGES3/p23, TSC1 and client protein TSC2. Probably forms a complex composed of chaperones HSP90 and HSP70, co-chaperones CDC37, PPP5C, TSC1 and client protein TSC2, CDK4, AKT, RAF1 and NR3C1; this complex does not contain co-chaperones STIP1/HOP and PTGES3/p23. Part of a complex with HSP90/HSP90AA1 and steroid receptors. Interacts (via TPR repeats) with HSP90AA1 (via TPR repeat-binding motif) or HSPA1A/HSPA1B; the interaction is direct and activates the phosphatase activity. Dissociates from HSPA1A/HSPA1B and HSP90AA1 in response to arachidonic acid. Interacts with CPNE1 (via VWFA domain). Interacts with CDC16, CDC27. Interacts with KLHDC10 (via the 6 Kelch repeats); inhibits the phosphatase activity on MAP3K5. Interacts with ATM and ATR; both interactions are induced by DNA damage and enhance ATM and ATR kinase activity. Interacts with RAD17; reduced by DNA damage. Interacts with nuclear receptors such as NR3C1/GCR and PPARG (activated by agonist); regulates their transactivation activities. Interacts (via TPR repeats) with S100 proteins S100A1, S100A2, S100A6, S100B and S100P; the interactions are calcium-dependent, strongly activate PPP5C phosphatase activity and compete with HSP90AA1 and MAP3K5 interactions. Interacts with SMAD2 and SMAD3 but not with SMAD1; decreases SMAD3 phosphorylation and protein levels. Interacts (via TPR repeats) with CRY1 and CRY2; the interaction with CRY2 down-regulates the phosphatase activity on CSNK1E. Interacts (via TPR repeats) with the active form of RAC1, GNA12 or GNA13; these interactions activate the phosphatase activity and translocate PPP5C to the cell membrane. Interacts with FLCN. The cofactor is Mg(2+). Mn(2+) is required as a cofactor. Activated by at least two different proteolytic cleavages producing a 56 kDa and a 50 kDa form. In terms of tissue distribution, expressed in liver (at protein level) and brain, enriched in suprachiasmatic nuclei.

It is found in the nucleus. Its subcellular location is the cytoplasm. The protein localises to the cell membrane. It carries out the reaction O-phospho-L-seryl-[protein] + H2O = L-seryl-[protein] + phosphate. The catalysed reaction is O-phospho-L-threonyl-[protein] + H2O = L-threonyl-[protein] + phosphate. Autoinhibited. In the autoinhibited state, the TPR domain interacts with the catalytic region and prevents substrate access to the catalytic pocket. Allosterically activated by various polyunsaturated fatty acids, free long-chain fatty-acids and long-chain fatty acyl-CoA esters, arachidonic acid being the most effective activator. HSP90A and probably RAC1, GNA12 and GNA13 can also release the autoinhibition by the TPR repeat. Activation by RAC1, GNA12 and GNA13 is synergistic with the one produced by fatty acids binding. Inhibited by okadaic acid. Serine/threonine-protein phosphatase that dephosphorylates a myriad of proteins involved in different signaling pathways including the kinases CSNK1E, ASK1/MAP3K5, PRKDC and RAF1, the nuclear receptors NR3C1, PPARG, ESR1 and ESR2, SMAD proteins and TAU/MAPT. Implicated in wide ranging cellular processes, including apoptosis, differentiation, DNA damage response, cell survival, regulation of ion channels or circadian rhythms, in response to steroid and thyroid hormones, calcium, fatty acids, TGF-beta as well as oxidative and genotoxic stresses. Participates in the control of DNA damage response mechanisms such as checkpoint activation and DNA damage repair through, for instance, the regulation ATM/ATR-signaling and dephosphorylation of PRKDC and TP53BP1. Inhibits ASK1/MAP3K5-mediated apoptosis induced by oxidative stress. Plays a positive role in adipogenesis, mainly through the dephosphorylation and activation of PPARG transactivation function. Also dephosphorylates and inhibits the anti-adipogenic effect of NR3C1. Regulates the circadian rhythms, through the dephosphorylation and activation of CSNK1E. May modulate TGF-beta signaling pathway by the regulation of SMAD3 phosphorylation and protein expression levels. Dephosphorylates and may play a role in the regulation of TAU/MAPT. Through their dephosphorylation, may play a role in the regulation of ions channels such as KCNH2. Dephosphorylate FNIP1, disrupting interaction with HSP90AA1/Hsp90. The chain is Serine/threonine-protein phosphatase 5 (Ppp5c) from Mus musculus (Mouse).